We begin with the raw amino-acid sequence, 94 residues long: Pyrimidine/purine nucleoside phosphorylase (94 aa).

This sequence belongs to the nucleoside phosphorylase PpnP family.

It catalyses the reaction a purine D-ribonucleoside + phosphate = a purine nucleobase + alpha-D-ribose 1-phosphate. The enzyme catalyses adenosine + phosphate = alpha-D-ribose 1-phosphate + adenine. It carries out the reaction cytidine + phosphate = cytosine + alpha-D-ribose 1-phosphate. The catalysed reaction is guanosine + phosphate = alpha-D-ribose 1-phosphate + guanine. It catalyses the reaction inosine + phosphate = alpha-D-ribose 1-phosphate + hypoxanthine. The enzyme catalyses thymidine + phosphate = 2-deoxy-alpha-D-ribose 1-phosphate + thymine. It carries out the reaction uridine + phosphate = alpha-D-ribose 1-phosphate + uracil. The catalysed reaction is xanthosine + phosphate = alpha-D-ribose 1-phosphate + xanthine. Functionally, catalyzes the phosphorolysis of diverse nucleosides, yielding D-ribose 1-phosphate and the respective free bases. Can use uridine, adenosine, guanosine, cytidine, thymidine, inosine and xanthosine as substrates. Also catalyzes the reverse reactions. This is Pyrimidine/purine nucleoside phosphorylase from Escherichia fergusonii (strain ATCC 35469 / DSM 13698 / CCUG 18766 / IAM 14443 / JCM 21226 / LMG 7866 / NBRC 102419 / NCTC 12128 / CDC 0568-73).